The chain runs to 554 residues: Zinc finger protein 426 (554 aa).

In terms of domain architecture, KRAB spans 42–112; it reads VTFDDVAVDF…QGGVLQGWEM (71 aa). The segment at 146 to 174 adopts a C2H2-type 1; atypical zinc-finger fold; the sequence is CDCEQCGEVFSEHSCLKTHVRTQSTGNTH. 11 C2H2-type zinc fingers span residues 224–246, 280–302, 308–330, 336–358, 364–386, 392–414, 420–442, 448–470, 476–498, 504–526, and 532–554; these read FECS…MRTH, YKCK…MRTH, YECK…GRTH, YVCK…VRSH, YECK…IRTH, FVCV…LRTH, CECK…MRTH, YTCK…MRIH, YECK…ERTH, YECK…EKTH, and YKCQ…EQIH.

Its subcellular location is the nucleus. Its function is as follows. May be involved in transcriptional regulation. The sequence is that of Zinc finger protein 426 (ZNF426) from Homo sapiens (Human).